The sequence spans 1049 residues: RIMS-binding protein 2 (1049 aa).

One can recognise an SH3 1 domain in the interval 164 to 231 (GKVHLCVARY…PSNFVDFIQD (68 aa)). Fibronectin type-III domains follow at residues 294-387 (VPYP…GKDV), 390-471 (APSQ…EKDE), and 486-587 (PPQD…VPPA). Disordered stretches follow at residues 580 to 664 (PDLL…VSTT), 694 to 714 (SAGP…EVKR), and 728 to 750 (LGQQ…GSDL). Over residues 582-598 (LLVPPAPHPRTAPPPKP) the composition is skewed to pro residues. A compositionally biased stretch (basic and acidic residues) spans 603–616 (MDTKDLGPHVKVDE). The span at 641-651 (GPGRRSPSPSR) shows a compositional bias: low complexity. Phosphoserine occurs at positions 701 and 709. A compositionally biased stretch (basic and acidic residues) spans 735–746 (CHGDEYHTESSR). Phosphoserine occurs at positions 832 and 839. Position 841 is a phosphothreonine (Thr841). 2 SH3 domains span residues 848–916 (LPAR…EIHA) and 952–1019 (VPTR…EVPD). A disordered region spans residues 1024 to 1049 (HLSDAPPHYSHDPPMRTKAKRVSQPP). A compositionally biased stretch (basic residues) spans 1040-1049 (TKAKRVSQPP).

This sequence belongs to the RIMBP family. As to quaternary structure, interacts with CACNA1D and CACNA1B, and potentially with other Ca(2+) channel alpha-1 isoforms. Interacts with RIMS1 and RIMS2.

It is found in the cell membrane. It localises to the synapse. Its function is as follows. Plays a role in the synaptic transmission as bifunctional linker that interacts simultaneously with RIMS1, RIMS2, CACNA1D and CACNA1B. This is RIMS-binding protein 2 (Rimbp2) from Rattus norvegicus (Rat).